The primary structure comprises 395 residues: Obg-like ATPase 1 (395 aa).

The OBG-type G domain maps to 22–280 (LKVGILGLPN…MPEDERQKYL (259 aa)). 31–36 (NVGKST) contributes to the ATP binding site. Mg(2+) contacts are provided by serine 35 and threonine 55. Residue leucine 228 coordinates ATP. Positions 301 to 384 (QLEYFFTSGE…QDGDVIFFKF (84 aa)) constitute a TGS domain.

The protein belongs to the TRAFAC class OBG-HflX-like GTPase superfamily. OBG GTPase family. YchF/OLA1 subfamily. In terms of assembly, monomer. It depends on Mg(2+) as a cofactor. Expressed in the nervous system, pharyngeal muscles and intestine (at protein level).

It is found in the cytoplasm. In terms of biological role, hydrolyzes ATP, and can also hydrolyze GTP with lower efficiency. Has lower affinity for GTP. Plays a role in regulating starvation-induced thermotaxis responses in AFD thermosensory neurons. The sequence is that of Obg-like ATPase 1 from Caenorhabditis elegans.